Reading from the N-terminus, the 115-residue chain is Aspartate 1-decarboxylase (115 aa).

Ser-25 (schiff-base intermediate with substrate; via pyruvic acid) is an active-site residue. The residue at position 25 (Ser-25) is a Pyruvic acid (Ser). Thr-57 is a binding site for substrate. The active-site Proton donor is Tyr-58. 73 to 75 (GPA) contacts substrate.

It belongs to the PanD family. Heterooctamer of four alpha and four beta subunits. Requires pyruvate as cofactor. In terms of processing, is synthesized initially as an inactive proenzyme, which is activated by self-cleavage at a specific serine bond to produce a beta-subunit with a hydroxyl group at its C-terminus and an alpha-subunit with a pyruvoyl group at its N-terminus.

It localises to the cytoplasm. It catalyses the reaction L-aspartate + H(+) = beta-alanine + CO2. The protein operates within cofactor biosynthesis; (R)-pantothenate biosynthesis; beta-alanine from L-aspartate: step 1/1. Catalyzes the pyruvoyl-dependent decarboxylation of aspartate to produce beta-alanine. In Cytophaga hutchinsonii (strain ATCC 33406 / DSM 1761 / CIP 103989 / NBRC 15051 / NCIMB 9469 / D465), this protein is Aspartate 1-decarboxylase.